The primary structure comprises 417 residues: Serine hydroxymethyltransferase (417 aa).

Residues leucine 117 and 121 to 123 (GHL) contribute to the (6S)-5,6,7,8-tetrahydrofolate site. Lysine 226 is modified (N6-(pyridoxal phosphate)lysine).

This sequence belongs to the SHMT family. Homodimer. Requires pyridoxal 5'-phosphate as cofactor.

The protein localises to the cytoplasm. The catalysed reaction is (6R)-5,10-methylene-5,6,7,8-tetrahydrofolate + glycine + H2O = (6S)-5,6,7,8-tetrahydrofolate + L-serine. It participates in one-carbon metabolism; tetrahydrofolate interconversion. The protein operates within amino-acid biosynthesis; glycine biosynthesis; glycine from L-serine: step 1/1. In terms of biological role, catalyzes the reversible interconversion of serine and glycine with tetrahydrofolate (THF) serving as the one-carbon carrier. This reaction serves as the major source of one-carbon groups required for the biosynthesis of purines, thymidylate, methionine, and other important biomolecules. Also exhibits THF-independent aldolase activity toward beta-hydroxyamino acids, producing glycine and aldehydes, via a retro-aldol mechanism. This is Serine hydroxymethyltransferase from Syntrophus aciditrophicus (strain SB).